The following is a 263-amino-acid chain: Alpha-tubulin N-acetyltransferase 2 (263 aa).

An N-acetyltransferase domain is found at 1–181 (MEIAFDLSSI…NKYAVFPNFF (181 aa)). Acetyl-CoA is bound at residue 115–128 (FFIVPTEQRSGNGF). 2 disordered regions span residues 191 to 224 (TPRQ…RPRH) and 236 to 263 (FPRG…EPIW). Low complexity predominate over residues 200-212 (RASSAVSSHTTSR). Residues 253–263 (LTRDQRHEPIW) are compositionally biased toward basic and acidic residues.

It belongs to the acetyltransferase ATAT1 family.

The enzyme catalyses L-lysyl-[alpha-tubulin] + acetyl-CoA = N(6)-acetyl-L-lysyl-[alpha-tubulin] + CoA + H(+). In terms of biological role, specifically acetylates 'Lys-40' in alpha-tubulin/mec-12 on the lumenal side of microtubules. Promotes microtubule destabilization and accelerates microtubule dynamics; this activity may be independent of acetylation activity. Acetylates alpha-tubulin with a slow enzymatic rate, due to a catalytic site that is not optimized for acetyl transfer. Enters the microtubule through each end and diffuses quickly throughout the lumen of microtubules. Acetylates only long/old microtubules because of its slow acetylation rate since it does not have time to act on dynamically unstable microtubules before the enzyme is released. Required for the maintenance of touch receptor neurons and possibly other type of neurons involved in locomotion. This Caenorhabditis briggsae protein is Alpha-tubulin N-acetyltransferase 2 (atat-2).